Here is a 292-residue protein sequence, read N- to C-terminus: Cyclin-dependent kinase 5 homolog (292 aa).

The region spanning 4-286 (YEKLEKIGEG…AEQAMQHPYF (283 aa)) is the Protein kinase domain. Residues 10–18 (IGEGTYGTV) and Lys-33 each bind ATP. A Phosphothreonine modification is found at Thr-14. Tyr-15 is modified (phosphotyrosine). Residue Asp-126 is the Proton acceptor of the active site. A Phosphoserine modification is found at Ser-159.

This sequence belongs to the protein kinase superfamily. CMGC Ser/Thr protein kinase family. CDC2/CDKX subfamily.

It catalyses the reaction L-seryl-[protein] + ATP = O-phospho-L-seryl-[protein] + ADP + H(+). It carries out the reaction L-threonyl-[protein] + ATP = O-phospho-L-threonyl-[protein] + ADP + H(+). Functionally, probably involved in the control of the cell cycle. Interacts with D1 and D3-type G1 cyclins. Possible regulator of neuronal differentiation and/or development. This chain is Cyclin-dependent kinase 5 homolog (Cdk5), found in Glossina morsitans morsitans (Savannah tsetse fly).